A 510-amino-acid polypeptide reads, in one-letter code: D-allose import ATP-binding protein AlsA (510 aa).

2 ABC transporter domains span residues 6 to 245 (ISMA…VGRE) and 260 to 509 (LAHE…ALPQ). 38–45 (GENGAGKS) serves as a coordination point for ATP.

This sequence belongs to the ABC transporter superfamily. D-allose importer (TC 3.A.1.2.6) family. In terms of assembly, the complex is composed of two ATP-binding proteins (AlsA), two transmembrane proteins (AlsC) and a solute-binding protein (AlsB).

The protein localises to the cell inner membrane. The catalysed reaction is D-allose(out) + ATP + H2O = D-allose(in) + ADP + phosphate + H(+). Part of the ABC transporter complex AlsBAC involved in D-allose import. Probably responsible for energy coupling to the transport system. This chain is D-allose import ATP-binding protein AlsA (alsA), found in Escherichia coli (strain K12).